Reading from the N-terminus, the 300-residue chain is Spermine synthase SPE4 (300 aa).

Serine 5 bears the Phosphoserine mark. The PABS domain maps to 12-255 (DGWFREINDK…GQLGLIVCSN (244 aa)). Residues glutamine 44, aspartate 99, glutamate 119, and 151–152 (DG) each bind S-adenosyl 3-(methylsulfanyl)propylamine. The active-site Proton acceptor is the aspartate 174. Aspartate 177 is a spermidine binding site.

Belongs to the spermidine/spermine synthase family.

It catalyses the reaction S-adenosyl 3-(methylsulfanyl)propylamine + spermidine = spermine + S-methyl-5'-thioadenosine + H(+). Its pathway is amine and polyamine biosynthesis; spermine biosynthesis; spermine from spermidine: step 1/1. The chain is Spermine synthase SPE4 (SPE4) from Saccharomyces cerevisiae (strain ATCC 204508 / S288c) (Baker's yeast).